Here is a 193-residue protein sequence, read N- to C-terminus: MALPAIHNWEPYEDSLIRIKHSCFAMHELYRERYLLARTRMMYYDVPIIVLSSVSSVFIAGGDAYMSKSMVQILTCIMSLCVGIIGSLKKFFRVDENREQCLETYKDLFRMFCELAIVMDMPSTSRPGDPQQYSTETSSKYAEIMQRSLVLEGQRTKYNPIYDDHNPLPPEKKKSILSRTRSTKLSSGEITPV.

The segment at 158-193 is disordered; it reads YNPIYDDHNPLPPEKKKSILSRTRSTKLSSGEITPV. Basic and acidic residues predominate over residues 162–174; that stretch reads YDDHNPLPPEKKK. Polar residues predominate over residues 177-193; sequence LSRTRSTKLSSGEITPV.

This is an uncharacterized protein from Micromonas pusilla (Picoplanktonic green alga).